The primary structure comprises 49 residues: Large ribosomal subunit protein bL33A (49 aa).

The protein belongs to the bacterial ribosomal protein bL33 family.

The polypeptide is Large ribosomal subunit protein bL33A (Lactobacillus johnsonii (strain CNCM I-12250 / La1 / NCC 533)).